A 220-amino-acid chain; its full sequence is Large ribosomal subunit protein bL25 (220 aa).

The protein belongs to the bacterial ribosomal protein bL25 family. CTC subfamily. Part of the 50S ribosomal subunit; part of the 5S rRNA/L5/L18/L25 subcomplex. Contacts the 5S rRNA. Binds to the 5S rRNA independently of L5 and L18.

In terms of biological role, this is one of the proteins that binds to the 5S RNA in the ribosome where it forms part of the central protuberance. This chain is Large ribosomal subunit protein bL25, found in Zymomonas mobilis subsp. mobilis (strain ATCC 31821 / ZM4 / CP4).